The following is a 264-amino-acid chain: Diphthine synthase (264 aa).

Residues Leu10, Asp87, Val90, 115-116 (SI), Leu166, Ala209, and His234 each bind S-adenosyl-L-methionine.

Belongs to the diphthine synthase family. In terms of assembly, homodimer.

The catalysed reaction is 2-[(3S)-amino-3-carboxypropyl]-L-histidyl-[translation elongation factor 2] + 3 S-adenosyl-L-methionine = diphthine-[translation elongation factor 2] + 3 S-adenosyl-L-homocysteine + 3 H(+). The protein operates within protein modification; peptidyl-diphthamide biosynthesis. In terms of biological role, S-adenosyl-L-methionine-dependent methyltransferase that catalyzes the trimethylation of the amino group of the modified target histidine residue in translation elongation factor 2 (EF-2), to form an intermediate called diphthine. The three successive methylation reactions represent the second step of diphthamide biosynthesis. This chain is Diphthine synthase, found in Thermococcus kodakarensis (strain ATCC BAA-918 / JCM 12380 / KOD1) (Pyrococcus kodakaraensis (strain KOD1)).